Here is a 345-residue protein sequence, read N- to C-terminus: Holliday junction branch migration complex subunit RuvB (345 aa).

Residues 1–186 are large ATPase domain (RuvB-L); that stretch reads MSTDPDEREV…FGFTAHMDFY (186 aa). ATP is bound by residues Leu25, Arg26, Gly67, Lys70, Thr71, Ser72, 133-135, Arg176, Tyr186, and Arg223; that span reads EDF. Thr71 contributes to the Mg(2+) binding site. A small ATPAse domain (RuvB-S) region spans residues 187 to 257; it reads EPAELERVLV…VAKAALAVYD (71 aa). Positions 260–345 are head domain (RuvB-H); it reads ELGLDRLDRA…AGANQPGLFE (86 aa). Positions 315 and 320 each coordinate DNA.

This sequence belongs to the RuvB family. As to quaternary structure, homohexamer. Forms an RuvA(8)-RuvB(12)-Holliday junction (HJ) complex. HJ DNA is sandwiched between 2 RuvA tetramers; dsDNA enters through RuvA and exits via RuvB. An RuvB hexamer assembles on each DNA strand where it exits the tetramer. Each RuvB hexamer is contacted by two RuvA subunits (via domain III) on 2 adjacent RuvB subunits; this complex drives branch migration. In the full resolvosome a probable DNA-RuvA(4)-RuvB(12)-RuvC(2) complex forms which resolves the HJ.

Its subcellular location is the cytoplasm. It catalyses the reaction ATP + H2O = ADP + phosphate + H(+). The RuvA-RuvB-RuvC complex processes Holliday junction (HJ) DNA during genetic recombination and DNA repair, while the RuvA-RuvB complex plays an important role in the rescue of blocked DNA replication forks via replication fork reversal (RFR). RuvA specifically binds to HJ cruciform DNA, conferring on it an open structure. The RuvB hexamer acts as an ATP-dependent pump, pulling dsDNA into and through the RuvAB complex. RuvB forms 2 homohexamers on either side of HJ DNA bound by 1 or 2 RuvA tetramers; 4 subunits per hexamer contact DNA at a time. Coordinated motions by a converter formed by DNA-disengaged RuvB subunits stimulates ATP hydrolysis and nucleotide exchange. Immobilization of the converter enables RuvB to convert the ATP-contained energy into a lever motion, pulling 2 nucleotides of DNA out of the RuvA tetramer per ATP hydrolyzed, thus driving DNA branch migration. The RuvB motors rotate together with the DNA substrate, which together with the progressing nucleotide cycle form the mechanistic basis for DNA recombination by continuous HJ branch migration. Branch migration allows RuvC to scan DNA until it finds its consensus sequence, where it cleaves and resolves cruciform DNA. The sequence is that of Holliday junction branch migration complex subunit RuvB from Mycobacterium ulcerans (strain Agy99).